The following is a 144-amino-acid chain: Large ribosomal subunit protein uL11 (144 aa).

The protein belongs to the universal ribosomal protein uL11 family. As to quaternary structure, part of the ribosomal stalk of the 50S ribosomal subunit. Interacts with L10 and the large rRNA to form the base of the stalk. L10 forms an elongated spine to which L12 dimers bind in a sequential fashion forming a multimeric L10(L12)X complex. In terms of processing, one or more lysine residues are methylated.

In terms of biological role, forms part of the ribosomal stalk which helps the ribosome interact with GTP-bound translation factors. The polypeptide is Large ribosomal subunit protein uL11 (Francisella tularensis subsp. holarctica (strain OSU18)).